The primary structure comprises 80 residues: uncharacterized protein (80 aa).

This is an uncharacterized protein from Synechococcus sp. (strain PCC 6716).